We begin with the raw amino-acid sequence, 99 residues long: Protein Tat (99 aa).

A disordered region spans residues 1-22; that stretch reads MDPVDPNLEPWNHPGSQPRTPC. The interval 1–24 is interaction with human CREBBP; it reads MDPVDPNLEPWNHPGSQPRTPCNK. Residues 1–48 form a transactivation region; sequence MDPVDPNLEPWNHPGSQPRTPCNKCHCKKCCYHCPVCFLNKGLGISYG. 3 residues coordinate Zn(2+): C22, C25, and C27. Residues 22–37 form a cysteine-rich region; sequence CNKCHCKKCCYHCPVC. Position 28 is an N6-acetyllysine; by host PCAF (K28). Zn(2+) contacts are provided by C30, H33, C34, and C37. The tract at residues 38 to 48 is core; the sequence is FLNKGLGISYG. The interval 48–99 is disordered; it reads GRKKRRQRRGPPQGGQAHQVPIPKQPSSQPRGDPTGPKEQKKKVESEAETDP. A Nuclear localization signal, RNA-binding (TAR), and protein transduction motif is present at residues 49–57; that stretch reads RKKRRQRRG. The tract at residues 49 to 86 is interaction with the host capping enzyme RNGTT; sequence RKKRRQRRGPPQGGQAHQVPIPKQPSSQPRGDPTGPKE. An N6-acetyllysine; by host EP300 and GCN5L2 mark is found at K50 and K51. Asymmetric dimethylarginine; by host PRMT6 occurs at positions 52 and 53. K71 participates in a covalent cross-link: Glycyl lysine isopeptide (Lys-Gly) (interchain with G-Cter in ubiquitin). The Cell attachment site motif lies at 78–80; the sequence is RGD. The segment covering 83-93 has biased composition (basic and acidic residues); that stretch reads GPKEQKKKVES.

Belongs to the lentiviruses Tat family. In terms of assembly, interacts with host CCNT1. Associates with the P-TEFb complex composed at least of Tat, P-TEFb (CDK9 and CCNT1), TAR RNA, RNA Pol II. Recruits the HATs CREBBP, TAF1/TFIID, EP300, PCAF and GCN5L2. Interacts with host KAT5/Tip60; this interaction targets the latter to degradation. Interacts with the host deacetylase SIRT1. Interacts with host capping enzyme RNGTT; this interaction stimulates RNGTT. Binds to host KDR, and to the host integrins ITGAV/ITGB3 and ITGA5/ITGB1. Interacts with host KPNB1/importin beta-1 without previous binding to KPNA1/importin alpha-1. Interacts with EIF2AK2. Interacts with host nucleosome assembly protein NAP1L1; this interaction may be required for the transport of Tat within the nucleus, since the two proteins interact at the nuclear rim. Interacts with host C1QBP/SF2P32; this interaction involves lysine-acetylated Tat. Interacts with the host chemokine receptors CCR2, CCR3 and CXCR4. Interacts with host DPP4/CD26; this interaction may trigger an anti-proliferative effect. Interacts with host LDLR. Interacts with the host extracellular matrix metalloproteinase MMP1. Interacts with host PRMT6; this interaction mediates Tat's methylation. Interacts with, and is ubiquitinated by MDM2/Hdm2. Interacts with host PSMC3 and HTATIP2. Interacts with STAB1; this interaction may overcome SATB1-mediated repression of IL2 and IL2RA (interleukin) in T cells by binding to the same domain than HDAC1. Interacts (when acetylated) with human CDK13, thereby increasing HIV-1 mRNA splicing and promoting the production of the doubly spliced HIV-1 protein Nef. Interacts with host TBP; this interaction modulates the activity of transcriptional pre-initiation complex. Interacts with host RELA. Interacts with host PLSCR1; this interaction negatively regulates Tat transactivation activity by altering its subcellular distribution. Post-translationally, asymmetrical arginine methylation by host PRMT6 seems to diminish the transactivation capacity of Tat and affects the interaction with host CCNT1. In terms of processing, acetylation by EP300, CREBBP, GCN5L2/GCN5 and PCAF regulates the transactivation activity of Tat. EP300-mediated acetylation of Lys-50 promotes dissociation of Tat from the TAR RNA through the competitive binding to PCAF's bromodomain. In addition, the non-acetylated Tat's N-terminus can also interact with PCAF. PCAF-mediated acetylation of Lys-28 enhances Tat's binding to CCNT1. Lys-50 is deacetylated by SIRT1. Polyubiquitination by host MDM2 does not target Tat to degradation, but activates its transactivation function and fosters interaction with CCNT1 and TAR RNA. Post-translationally, phosphorylated by EIF2AK2 on serine and threonine residues adjacent to the basic region important for TAR RNA binding and function. Phosphorylation of Tat by EIF2AK2 is dependent on the prior activation of EIF2AK2 by dsRNA.

The protein resides in the host nucleus. It is found in the host nucleolus. Its subcellular location is the host cytoplasm. It localises to the secreted. In terms of biological role, transcriptional activator that increases RNA Pol II processivity, thereby increasing the level of full-length viral transcripts. Recognizes a hairpin structure at the 5'-LTR of the nascent viral mRNAs referred to as the transactivation responsive RNA element (TAR) and recruits the cyclin T1-CDK9 complex (P-TEFb complex) that will in turn hyperphosphorylate the RNA polymerase II to allow efficient elongation. The CDK9 component of P-TEFb and other Tat-activated kinases hyperphosphorylate the C-terminus of RNA Pol II that becomes stabilized and much more processive. Other factors such as HTATSF1/Tat-SF1, SUPT5H/SPT5, and HTATIP2 are also important for Tat's function. Besides its effect on RNA Pol II processivity, Tat induces chromatin remodeling of proviral genes by recruiting the histone acetyltransferases (HATs) CREBBP, EP300 and PCAF to the chromatin. This also contributes to the increase in proviral transcription rate, especially when the provirus integrates in transcriptionally silent region of the host genome. To ensure maximal activation of the LTR, Tat mediates nuclear translocation of NF-kappa-B by interacting with host RELA. Through its interaction with host TBP, Tat may also modulate transcription initiation. Tat can reactivate a latently infected cell by penetrating in it and transactivating its LTR promoter. In the cytoplasm, Tat is thought to act as a translational activator of HIV-1 mRNAs. Functionally, extracellular circulating Tat can be endocytosed by surrounding uninfected cells via the binding to several surface receptors such as CD26, CXCR4, heparan sulfate proteoglycans (HSPG) or LDLR. Neurons are rarely infected, but they internalize Tat via their LDLR. Through its interaction with nuclear HATs, Tat is potentially able to control the acetylation-dependent cellular gene expression. Modulates the expression of many cellular genes involved in cell survival, proliferation or in coding for cytokines or cytokine receptors. Tat plays a role in T-cell and neurons apoptosis. Tat induced neurotoxicity and apoptosis probably contribute to neuroAIDS. Circulating Tat also acts as a chemokine-like and/or growth factor-like molecule that binds to specific receptors on the surface of the cells, affecting many cellular pathways. In the vascular system, Tat binds to ITGAV/ITGB3 and ITGA5/ITGB1 integrins dimers at the surface of endothelial cells and competes with bFGF for heparin-binding sites, leading to an excess of soluble bFGF. The protein is Protein Tat of Homo sapiens (Human).